The following is a 119-amino-acid chain: Dihydroneopterin aldolase (119 aa).

Residues Glu-21, Tyr-53, and 72–73 (ID) contribute to the substrate site. Lys-99 serves as the catalytic Proton donor/acceptor.

Belongs to the DHNA family.

The catalysed reaction is 7,8-dihydroneopterin = 6-hydroxymethyl-7,8-dihydropterin + glycolaldehyde. It functions in the pathway cofactor biosynthesis; tetrahydrofolate biosynthesis; 2-amino-4-hydroxy-6-hydroxymethyl-7,8-dihydropteridine diphosphate from 7,8-dihydroneopterin triphosphate: step 3/4. In terms of biological role, catalyzes the conversion of 7,8-dihydroneopterin to 6-hydroxymethyl-7,8-dihydropterin. This chain is Dihydroneopterin aldolase (folB), found in Streptococcus pyogenes.